Reading from the N-terminus, the 3373-residue chain is Intermembrane lipid transfer protein vps13A (3373 aa).

A Chorein N-terminal domain is found at 3–119 (FEGLVSDVLS…QAELKKKKLE (117 aa)). 5 disordered regions span residues 818–858 (PKAT…VNSS), 1028–1096 (VPIN…KTAS), 1259–1304 (NNNK…DLEK), 1648–1729 (DPSI…EEEK), and 1872–1913 (QKKR…GKKD). Residues 823 to 839 (TPINDSNSPSSVSPKLI) show a composition bias toward polar residues. Composition is skewed to low complexity over residues 840–858 (STSPHSFSSSSAPVDVNSS) and 1048–1066 (SSPNQQSPNQQSPNQQSPQ). Composition is skewed to basic and acidic residues over residues 1263–1274 (SIEKSKSIDSKL) and 1288–1304 (RSDDNHEKSERELDLEK). Low complexity-rich tracts occupy residues 1659–1685 (QQQQQQSSSSSFIPSQQQQQQKVRSQS), 1695–1716 (SSIGGKESKTISSSISNNSLSS), and 1884–1898 (SSSTSLPSLNKSTNS). Positions 1899-1909 (FQTSTSGNSNS) are enriched in polar residues. The SHR-BD domain maps to 2405–2706 (TLSFYCQYWL…CYGWDEPSAE (302 aa)). Residues 2909–2933 (RGNNASNNNNNNGMTSSQMRQSGSG) are disordered. Low complexity predominate over residues 2911 to 2920 (NNASNNNNNN).

Belongs to the VPS13 family.

Its subcellular location is the membrane. Mediates the transfer of lipids between membranes at organelle contact sites. This chain is Intermembrane lipid transfer protein vps13A (vps13A), found in Dictyostelium discoideum (Social amoeba).